Consider the following 347-residue polypeptide: Protein YIPF3 (347 aa).

Positions 1 to 31 (MATPAAPASGVRNGAGPEWGGFEENIQGGGS) are disordered. Ala2 carries the N-acetylalanine; in Protein YIPF3, N-terminally processed modification. Topologically, residues 2–145 (ATPAAPASGV…PIKMVNFPQK (144 aa)) are cytoplasmic. The helical transmembrane segment at 146 to 166 (VAGELYGPLMLVFTLVAILLH) threads the bilayer. The Lumenal segment spans residues 167–184 (GMKTSDTIIREGTLMGTA). The chain crosses the membrane as a helical span at residues 185–205 (IGTCFGYWLGVSSFIYFLAYL). Over 206-211 (CNAQIT) the chain is Cytoplasmic. A helical transmembrane segment spans residues 212–234 (MLQMLALLGYGLFGHCIVLFITY). Residues 235 to 237 (NIH) lie on the Lumenal side of the membrane. The chain crosses the membrane as a helical span at residues 238 to 260 (LHALFYLFWLLVGGLSTLRMVAV). Residues 261–271 (LVSRTVGPTQR) are Cytoplasmic-facing. A helical transmembrane segment spans residues 272-292 (LLLCGTLAALHMLFLLYLHFA). Residues 293-347 (YHKVVEGILDTLEGPNIPPMQRVPRDIPAVLPAARLPVAVINATAKAIAVTLQSH) are Lumenal-facing. A glycan (N-linked (GlcNAc...) asparagine) is linked at Asn334.

It belongs to the YIP1 family. As to quaternary structure, interacts with YIPF4 and YIPF5. In terms of tissue distribution, expressed by splenocytes (at protein level).

Its subcellular location is the cell membrane. The protein resides in the golgi apparatus. The protein localises to the cis-Golgi network membrane. It is found in the cytoplasm. Involved in the maintenance of the Golgi structure. May play a role in hematopoiesis. The sequence is that of Protein YIPF3 (Yipf3) from Mus musculus (Mouse).